A 160-amino-acid polypeptide reads, in one-letter code: MSRRHAAEKRVILPDMKYNSILLSRFINNIMKEGKKALAEKIVYSAFNKIEKKHRVDPYQTFNNAMHNVKPHLEVTSVRVGGANYQVPTHVDERRGYALASRWIINAASKRSEKMMIDKLAEELFEASNNRGVAIKKKEDTHKMAEANKAFSHFSPKKMK.

It belongs to the universal ribosomal protein uS7 family. In terms of assembly, part of the 30S ribosomal subunit. Contacts proteins S9 and S11.

One of the primary rRNA binding proteins, it binds directly to 16S rRNA where it nucleates assembly of the head domain of the 30S subunit. Is located at the subunit interface close to the decoding center, probably blocks exit of the E-site tRNA. This is Small ribosomal subunit protein uS7 from Rickettsia conorii (strain ATCC VR-613 / Malish 7).